The following is a 488-amino-acid chain: Centrosomal protein cep57l1 (488 aa).

A coiled-coil region spans residues 71 to 226 (LESEKTHARD…AQVQTSLEVN (156 aa)). Disordered regions lie at residues 232-272 (SASS…PPSK) and 311-342 (PRVS…LMSS). Residues 241–250 (RKVKKKKQSK) show a composition bias toward basic residues. Basic and acidic residues-rich tracts occupy residues 259-270 (PSSKEPLSKEPP) and 314-325 (SQKDPKTVEHKP). The stretch at 377–403 (KNTDMREDLERELDYLVKQMEIKSDQI) forms a coiled coil. The interval 416–464 (LKKTAKKQPRPPSTTKPAEDEQNIGATDPCTPRNKGNLANGTGTPNSKA) is disordered. Positions 452–464 (NLANGTGTPNSKA) are enriched in polar residues.

This sequence belongs to the translokin family. In terms of assembly, interacts with clip1, mis12, ndc80 and zwint. Interacts with gamma-tubulin.

The protein localises to the cytoplasm. It is found in the cytoskeleton. It localises to the microtubule organizing center. The protein resides in the centrosome. Its subcellular location is the chromosome. The protein localises to the centromere. It is found in the kinetochore. It localises to the spindle. Its function is as follows. Required for spindle microtubule attachment to both kinetochores and centrosomes. Also functions to tether minus-ends of spindle microtubules to centrosomes. May act by forming ring-like structures around microtubules, or by serving as a cross-linker or scaffold at the attachment site. The chain is Centrosomal protein cep57l1 (cep57l1) from Xenopus laevis (African clawed frog).